The chain runs to 125 residues: Small ribosomal subunit protein uS13 (125 aa).

The tract at residues 95 to 125 is disordered; it reads GLPVNGQRTRTNARTRKGGKKTVANKKKVTK. Positions 105–125 are enriched in basic residues; that stretch reads TNARTRKGGKKTVANKKKVTK.

It belongs to the universal ribosomal protein uS13 family. As to quaternary structure, part of the 30S ribosomal subunit. Forms a loose heterodimer with protein S19. Forms two bridges to the 50S subunit in the 70S ribosome.

Functionally, located at the top of the head of the 30S subunit, it contacts several helices of the 16S rRNA. In the 70S ribosome it contacts the 23S rRNA (bridge B1a) and protein L5 of the 50S subunit (bridge B1b), connecting the 2 subunits; these bridges are implicated in subunit movement. Contacts the tRNAs in the A and P-sites. In Leptospira interrogans serogroup Icterohaemorrhagiae serovar copenhageni (strain Fiocruz L1-130), this protein is Small ribosomal subunit protein uS13.